Consider the following 211-residue polypeptide: Large ribosomal subunit protein eL13 (211 aa).

The residue at position 16 (Lys-16) is an N6-acetyllysine. Ser-52, Ser-77, and Ser-106 each carry phosphoserine. Residues Lys-123 and Lys-145 each participate in a glycyl lysine isopeptide (Lys-Gly) (interchain with G-Cter in SUMO2) cross-link. Lys-174 participates in a covalent cross-link: Glycyl lysine isopeptide (Lys-Gly) (interchain with G-Cter in SUMO1); alternate. Residues Lys-174 and Lys-177 each participate in a glycyl lysine isopeptide (Lys-Gly) (interchain with G-Cter in SUMO2); alternate cross-link. Lys-177 carries the post-translational modification N6-acetyllysine; alternate.

Belongs to the eukaryotic ribosomal protein eL13 family. As to quaternary structure, component of the large ribosomal subunit.

The protein resides in the cytoplasm. Component of the large ribosomal subunit. The ribosome is a large ribonucleoprotein complex responsible for the synthesis of proteins in the cell. This is Large ribosomal subunit protein eL13 (Rpl13) from Mus musculus (Mouse).